Here is a 366-residue protein sequence, read N- to C-terminus: MTDQTGKRALLPLLGIDKPIIQAPMAGVSTPALAAAVCNAGGLGSLGVGAMNADGARKVIRETRALTDKPFNINVFCHRPAQADAAVEQQWLSWLAPHFEKYGATPPAKLSDIYTSFLADPAMLAVFLEEKPAIVSFHFGLPSADVIAELKKAGIRLLASATNLQEAAQVEAAGVDAIVAQGIEAGGHRGVFDPDAFDDRLGTFALTRLLAKECRLPVIAAGGIMDGAGIAAALALGAQAAQLGTAFVACTETSIDEGYRRALLGEAARRTTFTAAISGRLARSMANSFTALGADPRSPEPATYPIAYDAGKALNAAAKAKGEFGYGAHWAGQAAALARSLPAAELVAQLERELKQSIEQLRQFAN.

Residues asparagine 74, glutamine 181, glycine 186, glycine 223, and 242-245 (QLGT) each bind FMN.

It belongs to the nitronate monooxygenase family. NMO class I subfamily. The cofactor is FMN.

It catalyses the reaction 3 propionate 3-nitronate + 3 O2 + H2O = 3 3-oxopropanoate + 2 nitrate + nitrite + H2O2 + 3 H(+). Nitronate monooxygenase that uses molecular oxygen to catalyze the oxidative denitrification of alkyl nitronates. Acts on propionate 3-nitronate (P3N), the presumed physiological substrate. Is likely involved in the degradation of P3N, that allows B.phytofirmans PsJN to grow on 3-nitropropionate/P3N as the sole source of nitrogen and carbon. Also probably functions in the detoxification of P3N, a metabolic poison produced by plants and fungi as a defense mechanism. Cannot oxidize nitroalkanes such as 3-nitropropionate, nitroethane, or 1-nitropropane. The sequence is that of Nitronate monooxygenase from Paraburkholderia phytofirmans (strain DSM 17436 / LMG 22146 / PsJN) (Burkholderia phytofirmans).